The chain runs to 181 residues: MDHQTAEALRAFTQRYCAAWQQQRNSLPRSEELYGVPSPCVVDTQGEAVFWQPQPFSLAQNISAVERALDIVVQQPLHSYYTTQFAGDMTGRFADETLTLLQTWSEEDFQRVQENLIGHLVVQKRLKLAPTLFIATLESGRDVISVCNLSGEVIKETLGTAKRITLSPSLASFLSHLEPVL.

It belongs to the Syd family.

The protein resides in the cell inner membrane. In terms of biological role, interacts with the SecY protein in vivo. May bind preferentially to an uncomplexed state of SecY, thus functioning either as a chelating agent for excess SecY in the cell or as a regulatory factor that negatively controls the translocase function. The chain is Protein Syd from Klebsiella pneumoniae (strain 342).